A 134-amino-acid polypeptide reads, in one-letter code: uncharacterized protein (134 aa).

An N-terminal signal peptide occupies residues 1–26 (MRLYKAMALCLPLVVICTSEVSQSTA). Residues 77–98 (GEKNEEVAGPVDGEGSEEEAFD) form a disordered region.

This is an uncharacterized protein from Encephalitozoon cuniculi (strain GB-M1) (Microsporidian parasite).